The sequence spans 395 residues: MKRVLIMMLDSFGIGGAEDADKFGDKGANTLGHIASHQPSLNLPHLESLGLGLAAKESCGELPKHFQNQPHLIGGYAFAREISSGKDTTSGHWEIAGVPVLFDWGLFPDKQNSFPKPLLDRIVAKAGIKGYLGNCHSSGTVILDQLGEEHMKTGLPIFYTSADSVFQIAAHEETFGLNNLYELCEIVRTELEGYNIGRVIARPFIGNKAGAFKRTGNRRDYSVEPPAKTVLQKFIEEKEGMVVSVGKIADIYAHTGISKKVKATGLEELFDKTLEEVKSAGDNTIVFTNFVNFDADFGHRRDVTGYAKGLEYFDRRLPELLRLMKDDDLLIITADHGCDPTWQGSDHTREHIPVLMYGAQVPARFLGARETFADIGQTVAKYLGVSPMEYGTAII.

Residues Asp-10, Asp-294, His-299, Asp-335, His-336, and His-347 each contribute to the Mn(2+) site.

It belongs to the phosphopentomutase family. It depends on Mn(2+) as a cofactor.

The protein resides in the cytoplasm. It carries out the reaction 2-deoxy-alpha-D-ribose 1-phosphate = 2-deoxy-D-ribose 5-phosphate. It catalyses the reaction alpha-D-ribose 1-phosphate = D-ribose 5-phosphate. It functions in the pathway carbohydrate degradation; 2-deoxy-D-ribose 1-phosphate degradation; D-glyceraldehyde 3-phosphate and acetaldehyde from 2-deoxy-alpha-D-ribose 1-phosphate: step 1/2. Isomerase that catalyzes the conversion of deoxy-ribose 1-phosphate (dRib-1-P) and ribose 1-phosphate (Rib-1-P) to deoxy-ribose 5-phosphate (dRib-5-P) and ribose 5-phosphate (Rib-5-P), respectively. This Actinobacillus succinogenes (strain ATCC 55618 / DSM 22257 / CCUG 43843 / 130Z) protein is Phosphopentomutase.